The following is a 275-amino-acid chain: 2,3,4,5-tetrahydropyridine-2,6-dicarboxylate N-succinyltransferase (275 aa).

Residues R104 and D141 each coordinate substrate.

The protein belongs to the transferase hexapeptide repeat family. As to quaternary structure, homotrimer.

The protein resides in the cytoplasm. It catalyses the reaction (S)-2,3,4,5-tetrahydrodipicolinate + succinyl-CoA + H2O = (S)-2-succinylamino-6-oxoheptanedioate + CoA. The protein operates within amino-acid biosynthesis; L-lysine biosynthesis via DAP pathway; LL-2,6-diaminopimelate from (S)-tetrahydrodipicolinate (succinylase route): step 1/3. This is 2,3,4,5-tetrahydropyridine-2,6-dicarboxylate N-succinyltransferase from Mannheimia succiniciproducens (strain KCTC 0769BP / MBEL55E).